The chain runs to 588 residues: Transport ATP-binding protein AarD (588 aa).

In terms of domain architecture, ABC transmembrane type-1 spans 24–316 (LRISMLLGVV…LGTYYHAKAQ (293 aa)). The next 6 membrane-spanning stretches (helical) occupy residues 29–49 (LLGVVSGLLIIAQAWFLAVIL), 62–82 (LLTPFILLLAVFVLRALLTVI), 149–169 (IIPIMILIAIFPFNWAAALIL), 170–190 (FATAPLIPIFMALVGLGAADA), 250–270 (SGVLEFFASISIAIVAVYFGF), and 276–296 (LNFGSYGLPVTMFAGFLALIL). The 234-residue stretch at 350 to 583 (IEANKLEIYS…EGPFARLLAH (234 aa)) folds into the ABC transporter domain. 383–390 (GQSGAGKS) serves as a coordination point for ATP.

This sequence belongs to the ABC transporter superfamily.

Its subcellular location is the cell inner membrane. Its function is as follows. Somehow involved in the cytochrome D branch of aerobic respiration. Seems to be a component of a transport system. This Providencia stuartii protein is Transport ATP-binding protein AarD (aarD).